Consider the following 234-residue polypeptide: Small ribosomal subunit protein uS3 (234 aa).

The region spanning 39-108 (IRKFVKKKLF…TVIVNVVEVK (70 aa)) is the KH type-2 domain. The segment at 212-234 (KGKNEETNNETADNSRGRRREAK) is disordered.

Belongs to the universal ribosomal protein uS3 family. As to quaternary structure, part of the 30S ribosomal subunit. Forms a tight complex with proteins S10 and S14.

Binds the lower part of the 30S subunit head. Binds mRNA in the 70S ribosome, positioning it for translation. The chain is Small ribosomal subunit protein uS3 from Alkaliphilus metalliredigens (strain QYMF).